The sequence spans 513 residues: ATP synthase subunit alpha (513 aa).

169-176 (GDRQTGKT) serves as a coordination point for ATP.

The protein belongs to the ATPase alpha/beta chains family. F-type ATPases have 2 components, CF(1) - the catalytic core - and CF(0) - the membrane proton channel. CF(1) has five subunits: alpha(3), beta(3), gamma(1), delta(1), epsilon(1). CF(0) has three main subunits: a(1), b(2) and c(9-12). The alpha and beta chains form an alternating ring which encloses part of the gamma chain. CF(1) is attached to CF(0) by a central stalk formed by the gamma and epsilon chains, while a peripheral stalk is formed by the delta and b chains.

Its subcellular location is the cell inner membrane. The enzyme catalyses ATP + H2O + 4 H(+)(in) = ADP + phosphate + 5 H(+)(out). Produces ATP from ADP in the presence of a proton gradient across the membrane. The alpha chain is a regulatory subunit. This chain is ATP synthase subunit alpha, found in Actinobacillus succinogenes (strain ATCC 55618 / DSM 22257 / CCUG 43843 / 130Z).